The chain runs to 260 residues: Tryptophan synthase alpha chain (260 aa).

Residues Glu-52 and Asp-63 each act as proton acceptor in the active site.

This sequence belongs to the TrpA family. Tetramer of two alpha and two beta chains.

The catalysed reaction is (1S,2R)-1-C-(indol-3-yl)glycerol 3-phosphate + L-serine = D-glyceraldehyde 3-phosphate + L-tryptophan + H2O. It participates in amino-acid biosynthesis; L-tryptophan biosynthesis; L-tryptophan from chorismate: step 5/5. In terms of biological role, the alpha subunit is responsible for the aldol cleavage of indoleglycerol phosphate to indole and glyceraldehyde 3-phosphate. In Streptococcus mutans serotype c (strain ATCC 700610 / UA159), this protein is Tryptophan synthase alpha chain.